We begin with the raw amino-acid sequence, 572 residues long: DNA polymerase (572 aa).

The segment at 1 to 222 is 3'-5' exonuclease and strand displacement activities; sequence MPRKMFSCDF…LPMDKEIRRA (222 aa). The segment at 56–66 is interaction with the primer terminal protein; the sequence is YFHNLKFDGAF. Residues Asp-142 and Asp-166 each contribute to the Mg(2+) site. The interval 223 to 226 is DNA-binding; Involved in the formation of a stable complex between TP and phi29 DNA polymerase; that stretch reads YRGG. Residues 227–572 are initiation, polymerization and pyrophosphorolytic activities; the sequence is FTWLNDKYKE…VLVDSVFTIK (346 aa). Mg(2+)-binding residues include Asp-246 and Val-247. Residues Tyr-251, Lys-368, and Lys-380 each contribute to the 5-methyl-UTP site. The Mg(2+) site is built by Asp-453 and Asp-455. 5-methyl-UTP is bound at residue Asp-455.

This sequence belongs to the DNA polymerase type-B family. In terms of assembly, interacts with the primer terminal protein; this interaction allows the initiation of TP-primed DNA replication at both viral DNA ends. Interacts with DNA. Requires Mg(2+) as cofactor.

The catalysed reaction is DNA(n) + a 2'-deoxyribonucleoside 5'-triphosphate = DNA(n+1) + diphosphate. In terms of biological role, polymerase responsible for protein-primed viral DNA replication by strand displacement with high processivity and fidelity. To start replication, the DNA polymerase forms a heterodimer with a free primer terminal protein (TP), recognizes the replication origins at both 5' ends of the linear chromosome, and initiates replication using as primer the OH-group of Ser-232 of the TP. This polymerase possesses three enzymatic activities: DNA synthesis (polymerase), primer terminal protein (TP) deoxynucleotidylation, which is the formation of a covalent linkage (phosphoester) between the hydroxyl group of a specific serine residue in TP and 5'-dAMP, a reaction directed by the second T at the 3' end, and 3' to 5' exonuclease activity. Exonuclease activity has a proofreading purpose. The sequence is that of DNA polymerase (2) from Bacillus phage B103 (Bacteriophage B103).